The sequence spans 871 residues: Valine--tRNA ligase (871 aa).

The short motif at 47–57 (PNVTGRLHIGH) is the 'HIGH' region element. Residues 534–538 (KMSKS) carry the 'KMSKS' region motif. K537 contributes to the ATP binding site. The stretch at 805-871 (DLTPILNRLN…IEEELARLTR (67 aa)) forms a coiled coil.

The protein belongs to the class-I aminoacyl-tRNA synthetase family. ValS type 1 subfamily. As to quaternary structure, monomer.

Its subcellular location is the cytoplasm. The enzyme catalyses tRNA(Val) + L-valine + ATP = L-valyl-tRNA(Val) + AMP + diphosphate. In terms of biological role, catalyzes the attachment of valine to tRNA(Val). As ValRS can inadvertently accommodate and process structurally similar amino acids such as threonine, to avoid such errors, it has a 'posttransfer' editing activity that hydrolyzes mischarged Thr-tRNA(Val) in a tRNA-dependent manner. This chain is Valine--tRNA ligase, found in Nitratiruptor sp. (strain SB155-2).